The following is a 674-amino-acid chain: DNA ligase (674 aa).

Residues 35–39, 84–85, and glutamate 118 each bind NAD(+); these read DYDFD and SL. Residue lysine 120 is the N6-AMP-lysine intermediate of the active site. Residues arginine 141, glutamate 184, lysine 297, and lysine 321 each contribute to the NAD(+) site. Cysteine 415, cysteine 418, cysteine 433, and cysteine 439 together coordinate Zn(2+). Residues 598-674 enclose the BRCT domain; the sequence is LVNTNFEGLT…ITEDEFDALL (77 aa).

The protein belongs to the NAD-dependent DNA ligase family. LigA subfamily. Mg(2+) is required as a cofactor. Mn(2+) serves as cofactor.

The enzyme catalyses NAD(+) + (deoxyribonucleotide)n-3'-hydroxyl + 5'-phospho-(deoxyribonucleotide)m = (deoxyribonucleotide)n+m + AMP + beta-nicotinamide D-nucleotide.. In terms of biological role, DNA ligase that catalyzes the formation of phosphodiester linkages between 5'-phosphoryl and 3'-hydroxyl groups in double-stranded DNA using NAD as a coenzyme and as the energy source for the reaction. It is essential for DNA replication and repair of damaged DNA. This chain is DNA ligase, found in Chlorobium phaeovibrioides (strain DSM 265 / 1930) (Prosthecochloris vibrioformis (strain DSM 265)).